Here is a 106-residue protein sequence, read N- to C-terminus: Large ribosomal subunit protein eL30 (106 aa).

Belongs to the eukaryotic ribosomal protein eL30 family.

This chain is Large ribosomal subunit protein eL30 (rpl30e), found in Sulfurisphaera tokodaii (strain DSM 16993 / JCM 10545 / NBRC 100140 / 7) (Sulfolobus tokodaii).